Here is a 156-residue protein sequence, read N- to C-terminus: Small ribosomal subunit protein uS7 (156 aa).

It belongs to the universal ribosomal protein uS7 family. In terms of assembly, part of the 30S ribosomal subunit. Contacts proteins S9 and S11.

Functionally, one of the primary rRNA binding proteins, it binds directly to 16S rRNA where it nucleates assembly of the head domain of the 30S subunit. Is located at the subunit interface close to the decoding center, probably blocks exit of the E-site tRNA. The sequence is that of Small ribosomal subunit protein uS7 from Actinobacillus succinogenes (strain ATCC 55618 / DSM 22257 / CCUG 43843 / 130Z).